The chain runs to 311 residues: Meteorin-like protein (311 aa).

The first 45 residues, 1–45 (MRGAVWAARRRAGQQWPRSPGPGPGPPPPPPLLLLLLLLLGGASA), serve as a signal peptide directing secretion. C52 and C75 are oxidised to a cystine. An N-linked (GlcNAc...) asparagine glycan is attached at N103. 4 disulfide bridges follow: C107–C143, C188–C260, C191–C284, and C201–C306.

The protein belongs to the meteorin family. In terms of processing, N-glycosylated. As to expression, highly expressed in subcutaneous adipose tissue.

It localises to the secreted. Hormone induced following exercise or cold exposure that promotes energy expenditure. Induced either in the skeletal muscle after exercise or in adipose tissue following cold exposure and is present in the circulation. Able to stimulate energy expenditure associated with the browning of the white fat depots and improves glucose tolerance. Does not promote an increase in a thermogenic gene program via direct action on adipocytes, but acts by stimulating several immune cell subtypes to enter the adipose tissue and activate their prothermogenic actions. Stimulates an eosinophil-dependent increase in IL4 expression and promotes alternative activation of adipose tissue macrophages, which are required for the increased expression of the thermogenic and anti-inflammatory gene programs in fat. Required for some cold-induced thermogenic responses, suggesting a role in metabolic adaptations to cold temperatures. The polypeptide is Meteorin-like protein (Metrnl) (Mus musculus (Mouse)).